The chain runs to 453 residues: Ribulose bisphosphate carboxylase large chain (453 aa).

Residues 1–2 (MS) constitute a propeptide that is removed on maturation. Residue Pro-3 is modified to N-acetylproline. An N6,N6,N6-trimethyllysine modification is found at Lys-14. Substrate is bound by residues Asn-123 and Thr-173. Lys-175 acts as the Proton acceptor in catalysis. Lys-177 lines the substrate pocket. Lys-201, Asp-203, and Glu-204 together coordinate Mg(2+). An N6-carboxylysine modification is found at Lys-201. The Proton acceptor role is filled by His-294. The substrate site is built by Arg-295, His-327, and Ser-379.

The protein belongs to the RuBisCO large chain family. Type I subfamily. As to quaternary structure, heterohexadecamer of 8 large chains and 8 small chains; disulfide-linked. The disulfide link is formed within the large subunit homodimers. It depends on Mg(2+) as a cofactor. The disulfide bond which can form in the large chain dimeric partners within the hexadecamer appears to be associated with oxidative stress and protein turnover.

It is found in the plastid. The protein resides in the chloroplast. The enzyme catalyses 2 (2R)-3-phosphoglycerate + 2 H(+) = D-ribulose 1,5-bisphosphate + CO2 + H2O. It catalyses the reaction D-ribulose 1,5-bisphosphate + O2 = 2-phosphoglycolate + (2R)-3-phosphoglycerate + 2 H(+). In terms of biological role, ruBisCO catalyzes two reactions: the carboxylation of D-ribulose 1,5-bisphosphate, the primary event in carbon dioxide fixation, as well as the oxidative fragmentation of the pentose substrate in the photorespiration process. Both reactions occur simultaneously and in competition at the same active site. This chain is Ribulose bisphosphate carboxylase large chain, found in Phuopsis stylosa (Caucasian crosswort).